The chain runs to 452 residues: Serine--tRNA ligase (452 aa).

251–253 (TSE) lines the L-serine pocket. ATP is bound at residue 282–284 (RSE). Residue Glu305 coordinates L-serine. 369-372 (EISS) provides a ligand contact to ATP. Residue Ser404 coordinates L-serine.

It belongs to the class-II aminoacyl-tRNA synthetase family. Type-1 seryl-tRNA synthetase subfamily. Homodimer. The tRNA molecule binds across the dimer.

It is found in the cytoplasm. It catalyses the reaction tRNA(Ser) + L-serine + ATP = L-seryl-tRNA(Ser) + AMP + diphosphate + H(+). It carries out the reaction tRNA(Sec) + L-serine + ATP = L-seryl-tRNA(Sec) + AMP + diphosphate + H(+). Its pathway is aminoacyl-tRNA biosynthesis; selenocysteinyl-tRNA(Sec) biosynthesis; L-seryl-tRNA(Sec) from L-serine and tRNA(Sec): step 1/1. Functionally, catalyzes the attachment of serine to tRNA(Ser). Is also able to aminoacylate tRNA(Sec) with serine, to form the misacylated tRNA L-seryl-tRNA(Sec), which will be further converted into selenocysteinyl-tRNA(Sec). This is Serine--tRNA ligase from Albidiferax ferrireducens (strain ATCC BAA-621 / DSM 15236 / T118) (Rhodoferax ferrireducens).